A 601-amino-acid chain; its full sequence is Proteasome-associated ATPase (601 aa).

A compositionally biased stretch (gly residues) spans 1-15 (MSGPRSGSGSGGSTG). The tract at residues 1–31 (MSGPRSGSGSGGSTGRPGDAESRRSAYEKEA) is disordered. Residues 18 to 31 (GDAESRRSAYEKEA) are compositionally biased toward basic and acidic residues. Residues 18-106 (GDAESRRSAY…LKEEVDRLAQ (89 aa)) adopt a coiled-coil conformation. Position 289 to 294 (289 to 294 (GCGKTL)) interacts with ATP. The segment at 600–601 (YL) is docks into pockets in the proteasome alpha-ring.

Belongs to the AAA ATPase family. Homohexamer. Assembles into a hexameric ring structure that caps the 20S proteasome core. Strongly interacts with the prokaryotic ubiquitin-like protein Pup through a hydrophobic interface; the interacting region of ARC lies in its N-terminal coiled-coil domain. There is one Pup binding site per ARC hexamer ring. Upon ATP-binding, the C-terminus of ARC interacts with the alpha-rings of the proteasome core, possibly by binding to the intersubunit pockets.

It functions in the pathway protein degradation; proteasomal Pup-dependent pathway. Its function is as follows. ATPase which is responsible for recognizing, binding, unfolding and translocation of pupylated proteins into the bacterial 20S proteasome core particle. May be essential for opening the gate of the 20S proteasome via an interaction with its C-terminus, thereby allowing substrate entry and access to the site of proteolysis. Thus, the C-termini of the proteasomal ATPase may function like a 'key in a lock' to induce gate opening and therefore regulate proteolysis. This Frankia alni (strain DSM 45986 / CECT 9034 / ACN14a) protein is Proteasome-associated ATPase.